The sequence spans 166 residues: Pyruvoyl-dependent arginine decarboxylase (166 aa).

Serine 45 is subject to Pyruvic acid (Ser).

The protein belongs to the PdaD family. Pyruvate serves as cofactor.

It catalyses the reaction L-arginine + H(+) = agmatine + CO2. The protein is Pyruvoyl-dependent arginine decarboxylase of Methanocella arvoryzae (strain DSM 22066 / NBRC 105507 / MRE50).